A 194-amino-acid chain; its full sequence is Calcium channel flower (194 aa).

The next 3 helical transmembrane spans lie at 34 to 54, 59 to 79, and 107 to 127; these read LLGI…VFSI, VSCL…MLLE, and GLYI…ASLF.

The protein belongs to the calcium channel flower family. As to quaternary structure, homomultimer. Associates with the dally/ magu complex.

It is found in the cell membrane. The protein localises to the cytoplasmic vesicle. Its subcellular location is the secretory vesicle. It localises to the synaptic vesicle membrane. The protein resides in the presynaptic cell membrane. It is found in the endosome. Channel activity is inhibited by La(3+), which reduces Ca(2+) influx and thus inhibits it's function in promoting activity-dependent bulk endocytosis (ADBE) in response to high stimuli. Its function is as follows. Transmembrane protein which mediates synaptic endocytosis, fitness-based cell culling, neuronal culling, morphogen gradient scaling, and calcium transport. Regulates synaptic endocytosis and hence couples exo- with endocytosis. Controls two major modes of synaptic vesicle (SV) endocytosis in the synaptic boutons of neuromuscular junctions (NMJs); Ca(2+) channel-independent Clathrin-mediated endocytosis (CME) in response to mild stimulation, and Ca(2+) channel-dependent activity-dependent bulk endocytosis (ADBE) in response to strong stimulation. Functions in ADBE and subsequent SV reformation from bulk endosomes by initiating Ca(2+) channel-dependent phosphatidylinositol 4,5-bisphosphate (PtdIns(4,5)P2) compartmentalization in synaptic boutons. There it acts at the periactive zone to provide the low Ca(2+) levels required to initiate Calcineurin activation and upregulate PtdIns(4,5)P2. Conversely PtdIns(4,5)P2 enhances fwe Ca(2+) channel-activity, establishing a positive feedback loop that induces PtdIns(4,5)P2 microdomain at the periactive zone. These microdomains trigger bulk membrane invagination (i.e. ADBE) by triggering actin polymerization while also promoting localization of fwe to bulk endosomes, thereby removing the ADBE trigger to reduce endocytosis and prevent excess membrane uptake. PtdIns(4,5)P2 then promotes SV reformation from the bulk endosomes, to coordinate ADBE and subsequent SV reformation. Different combinations of the flower isoforms at the cell membrane are also required for the identification and elimination of suboptimal or supernumerary cells during development, regeneration, and adulthood. Required for the recognition and elimination of unfit cells in the developing wing during cell competition. In the developing pupal retina, mediates the elimination of unwanted postmitotic neurons, including supernumerary photoreceptor neurons that form at the periphery of the retina and are contained within incomplete ommatidia units. Also required for efficient elimination and replacement of old neurons by newly generated neurons during regeneration in the adult brain following mechanical injury. Downstream of the flower fitness fingerprints, cells identified as unwanted or unfit are eliminated via apoptosis through the expression of ahuizotl (azot). However, the cells marked for elimination by the flower isoforms only undergo apoptosis if additional thresholds are met; (1) their neighboring fit/healthy cells express different levels of the fwe isoforms, and (2) the levels of the protective signal SPARC expressed by the loser or unwanted cells are unable to inhibit caspase activation. These additional thresholds for flower-mediated apoptosis, allows useful cells to recover from transient and limited stress before they are unnecessarily eliminated. Functions with dally and magu in a mechanism of scaling, which utilises apoptosis to ensure that the dpp morphogen gradient, which mediates organ growth, remains proportional to the size of the growing wing. In this mechanism, fwe represses dally- and Magu-dependent activity in expanding the gradient, and dally/Magu inhibits fwe-dependent apoptosis to keep cell death rate low. When the levels of these different proteins are optimally regulated the gradient correctly scales with organ growth but when this fails, fwe-mediated apoptosis is activated to trim the developing tissue to match the correct size of the gradient. In Drosophila erecta (Fruit fly), this protein is Calcium channel flower.